The primary structure comprises 239 residues: Immunoglobulin superfamily member 23 (239 aa).

Residues 63–93 (ELEAQPPTSSSPKGLPGRPRTSQEVPNAEDN) are disordered. The region spanning 94–179 (PSLIPLVTFP…ELVSEPVTVS (86 aa)) is the Ig-like domain. Residues 214 to 234 (LIVAATIGGLVLIGSVCFYIL) traverse the membrane as a helical segment.

The protein localises to the cell membrane. Its function is as follows. May be involved in osteoclast differentiation. This Mus musculus (Mouse) protein is Immunoglobulin superfamily member 23.